Here is a 184-residue protein sequence, read N- to C-terminus: UPF0301 protein RHOS4_26140 (184 aa).

This sequence belongs to the UPF0301 (AlgH) family.

In Cereibacter sphaeroides (strain ATCC 17023 / DSM 158 / JCM 6121 / CCUG 31486 / LMG 2827 / NBRC 12203 / NCIMB 8253 / ATH 2.4.1.) (Rhodobacter sphaeroides), this protein is UPF0301 protein RHOS4_26140.